The sequence spans 158 residues: Urease subunit beta (158 aa).

The disordered stretch occupies residues 113–158 (EDDWRRSSAAGDAPQELPQVEAAERGRKLDEATDVGTEDTPEEGQN). Positions 134 to 143 (AAERGRKLDE) are enriched in basic and acidic residues. Residues 144 to 158 (ATDVGTEDTPEEGQN) are compositionally biased toward acidic residues.

The protein belongs to the urease beta subunit family. Heterotrimer of UreA (gamma), UreB (beta) and UreC (alpha) subunits. Three heterotrimers associate to form the active enzyme.

It localises to the cytoplasm. It catalyses the reaction urea + 2 H2O + H(+) = hydrogencarbonate + 2 NH4(+). It participates in nitrogen metabolism; urea degradation; CO(2) and NH(3) from urea (urease route): step 1/1. The protein is Urease subunit beta of Corynebacterium glutamicum (strain R).